Reading from the N-terminus, the 1040-residue chain is Multidrug resistance protein MdtB (1040 aa).

12 consecutive transmembrane segments (helical) span residues 16-36 (FIMRPVATTLLMVAILLAGII), 342-362 (DTQFELMLAIALVVMIIYLFL), 369-389 (IIPGVAVPLSLVGTFAVMVFL), 396-416 (LTLMALTIATGFVVDDAIVVI), 440-460 (IGFTIISLTFSLIAVLIPLLF), 472-492 (FAVTLAVAILISAVVSLTLTP), 537-557 (WLTLGVALSTLALSIILWVFI), 863-883 (LGSTVWLVVAAVVAMYIVLGV), 888-908 (FIHPITILSTLPTAGVGALLA), 911-931 (LAGSELDVIAIIGIILLIGIV), 968-988 (ILMTTLAALLGALPLMLSTGV), and 998-1018 (IGMVGGLMLSQVLTLFTTPVI).

The protein belongs to the resistance-nodulation-cell division (RND) (TC 2.A.6) family. MdtB subfamily. As to quaternary structure, part of a tripartite efflux system composed of MdtA, MdtB and MdtC. MdtB forms a heteromultimer with MdtC.

The protein localises to the cell inner membrane. The sequence is that of Multidrug resistance protein MdtB from Klebsiella pneumoniae (strain 342).